The sequence spans 729 residues: Catalase-peroxidase (729 aa).

Residues 1 to 24 (MDAKTNDGKAGQCPFTSGRGHKNR) form a disordered region. Residues 95–217 (WHSAGTYRIT…LAAVQMGLIY (123 aa)) constitute a cross-link (tryptophyl-tyrosyl-methioninium (Trp-Tyr) (with M-243)). H96 serves as the catalytic Proton acceptor. Positions 217-243 (YVNPEGPNGQPDPLAAAKDIRETFLRM) form a cross-link, tryptophyl-tyrosyl-methioninium (Tyr-Met) (with W-95). H258 serves as a coordination point for heme b.

Belongs to the peroxidase family. Peroxidase/catalase subfamily. Homodimer or homotetramer. Requires heme b as cofactor. Formation of the three residue Trp-Tyr-Met cross-link is important for the catalase, but not the peroxidase activity of the enzyme.

It carries out the reaction H2O2 + AH2 = A + 2 H2O. The enzyme catalyses 2 H2O2 = O2 + 2 H2O. Functionally, bifunctional enzyme with both catalase and broad-spectrum peroxidase activity. The chain is Catalase-peroxidase from Nitrobacter winogradskyi (strain ATCC 25391 / DSM 10237 / CIP 104748 / NCIMB 11846 / Nb-255).